The chain runs to 610 residues: Elongation factor 4 (610 aa).

One can recognise a tr-type G domain in the interval 11–193; that stretch reads ENIRNFSIIA…QIVEKVPAPS (183 aa). GTP is bound by residues 23–28 and 140–143; these read DHGKST and NKID.

It belongs to the TRAFAC class translation factor GTPase superfamily. Classic translation factor GTPase family. LepA subfamily.

Its subcellular location is the cell membrane. The enzyme catalyses GTP + H2O = GDP + phosphate + H(+). Functionally, required for accurate and efficient protein synthesis under certain stress conditions. May act as a fidelity factor of the translation reaction, by catalyzing a one-codon backward translocation of tRNAs on improperly translocated ribosomes. Back-translocation proceeds from a post-translocation (POST) complex to a pre-translocation (PRE) complex, thus giving elongation factor G a second chance to translocate the tRNAs correctly. Binds to ribosomes in a GTP-dependent manner. In Streptococcus equi subsp. zooepidemicus (strain H70), this protein is Elongation factor 4.